Reading from the N-terminus, the 313-residue chain is Porphobilinogen deaminase (313 aa).

The residue at position 242 (Cys-242) is an S-(dipyrrolylmethanemethyl)cysteine.

It belongs to the HMBS family. Monomer. The cofactor is dipyrromethane.

The enzyme catalyses 4 porphobilinogen + H2O = hydroxymethylbilane + 4 NH4(+). It participates in porphyrin-containing compound metabolism; protoporphyrin-IX biosynthesis; coproporphyrinogen-III from 5-aminolevulinate: step 2/4. Its function is as follows. Tetrapolymerization of the monopyrrole PBG into the hydroxymethylbilane pre-uroporphyrinogen in several discrete steps. The polypeptide is Porphobilinogen deaminase (Pseudomonas syringae pv. syringae (strain B728a)).